The chain runs to 141 residues: Nucleoside diphosphate kinase (141 aa).

6 residues coordinate ATP: Lys-9, Phe-57, Arg-85, Thr-91, Arg-102, and Asn-112. His-115 functions as the Pros-phosphohistidine intermediate in the catalytic mechanism.

It belongs to the NDK family. As to quaternary structure, homotetramer. Mg(2+) serves as cofactor.

It is found in the cytoplasm. It carries out the reaction a 2'-deoxyribonucleoside 5'-diphosphate + ATP = a 2'-deoxyribonucleoside 5'-triphosphate + ADP. The catalysed reaction is a ribonucleoside 5'-diphosphate + ATP = a ribonucleoside 5'-triphosphate + ADP. Its function is as follows. Major role in the synthesis of nucleoside triphosphates other than ATP. The ATP gamma phosphate is transferred to the NDP beta phosphate via a ping-pong mechanism, using a phosphorylated active-site intermediate. The protein is Nucleoside diphosphate kinase of Chloroherpeton thalassium (strain ATCC 35110 / GB-78).